The following is a 401-amino-acid chain: Adenosine 3'-phospho 5'-phosphosulfate transporter 2 (401 aa).

N-linked (GlcNAc...) asparagine glycosylation is found at asparagine 12 and asparagine 71. 6 consecutive transmembrane segments (helical) span residues 78–98 (LTQF…YGYL), 114–134 (YLTL…LQLI), 147–167 (MIIA…LGYL), 170–190 (PTQV…GVFI), 196–216 (NVAD…FTLA), and 223–243 (NFNL…AVIG). A glycan (N-linked (GlcNAc...) asparagine) is linked at asparagine 254. Transmembrane regions (helical) follow at residues 267–287 (IGFV…PAVT), 298–317 (GYAF…VLAL), 324–346 (LIAV…IFFA), and 349–369 (FTFQ…LNVY).

It belongs to the nucleotide-sugar transporter family. SLC35B subfamily. Preferentially and highly expressed in colon.

It localises to the golgi apparatus membrane. The enzyme catalyses 3'-phosphoadenylyl sulfate(in) + adenosine 3',5'-bisphosphate(out) = 3'-phosphoadenylyl sulfate(out) + adenosine 3',5'-bisphosphate(in). Functionally, probably functions as a 3'-phosphoadenylyl sulfate:adenosine 3',5'-bisphosphate antiporter at the Golgi membranes. Mediates the transport from the cytosol into the lumen of the Golgi of 3'-phosphoadenylyl sulfate/adenosine 3'-phospho 5'-phosphosulfate (PAPS), a universal sulfuryl donor for sulfation events that take place in that compartment. This Homo sapiens (Human) protein is Adenosine 3'-phospho 5'-phosphosulfate transporter 2.